The sequence spans 415 residues: tRNA (cytosine(38)-C(5))-methyltransferase (415 aa).

Residues 4-396 enclose the SAM-dependent MTase C5-type domain; the sequence is LRVLELYSGI…TVLCEGFGNA (393 aa). S-adenosyl-L-methionine is bound by residues 13–15, Asp34, 57–58, and Ser76; these read IGG and IE. The active site involves Cys79. An S-adenosyl-L-methionine-binding site is contributed by Ser376.

It belongs to the class I-like SAM-binding methyltransferase superfamily. C5-methyltransferase family. Highly expressed in thymus, testis, and at much lower levels in spleen, lung, brain, heart, kidney, liver, skeletal muscle and embryonic stem cells.

Its subcellular location is the cytoplasm. The catalysed reaction is cytidine(38) in tRNA + S-adenosyl-L-methionine = 5-methylcytidine(38) in tRNA + S-adenosyl-L-homocysteine + H(+). In terms of biological role, specifically methylates cytosine 38 in the anticodon loop of tRNA(Asp). Has higher activity on tRNA(Asp) modified with queuosine at position 34. The protein is tRNA (cytosine(38)-C(5))-methyltransferase (Trdmt1) of Mus musculus (Mouse).